The chain runs to 394 residues: Proliferation-associated protein 2G4 (394 aa).

Ser-2 is modified (N-acetylserine). The residue at position 2 (Ser-2) is a Phosphoserine. Positions 2–48 (SGEDEQQEQTIAEDLVVTKYKMGGDIANRVLRSLVEASSSGVSVLSL) are necessary for nucleolar localization. Positions 46–54 (LSLCEKGDA) are RNA-binding. Residue Lys-298 forms a Glycyl lysine isopeptide (Lys-Gly) (interchain with G-Cter in SUMO2) linkage. A necessary for nucleolar localization region spans residues 301-394 (LLQPFNVLYE…ETLEENGAGD (94 aa)). At Ser-335 the chain carries Phosphoserine. The interval 358-394 (LQSSASRKTQKKKKKKASKTVENATSGETLEENGAGD) is disordered. Ser-361 is modified (phosphoserine; by PKC/PRKCD). The tract at residues 361–375 (SASRKTQKKKKKKAS) is interaction with RNA. Positions 365–375 (KTQKKKKKKAS) are enriched in basic residues. Phosphothreonine occurs at positions 366 and 386.

The protein belongs to the peptidase M24 family. As to quaternary structure, isoform 2 interacts with the cytoplasmic domain of non-phosphorylated ERBB3; the interaction requires PKC activity. Interacts with AR. Treatment with HRG leads to dissociation from ERBB3 and increases association with AR. Interacts with nucleolin/NCL. Component of a ribonucleoprotein complex containing at least PA2G4, NCL, TOP1, PABPC2, RPLP0, acetylated histone H1 (HIST1H1A or H1F1), histone H1 2/4, RPL4, RPL8, RPL15, RPL18, RPL18A, RPL21, RPL11, RPL12, RPL28, RPL27, RPLP2 and RPL24. Interacts with HDAC2. Interacts with RB1; the interaction is enhanced upon PA2G4 dephosphorylation. Interacts with AKT1. Isoform 1 and isoform 2 interact with RNF20. Isoform 2 interacts with HUWE1. Interacts with DNAJC21. In terms of processing, phosphorylated on serine and threonine residues. Phosphorylation is enhanced by HRG treatment. Basal phosphorylation is PKC-dependent and HRG-induced phosphorylation is predominantly PKC-independent. Phosphorylation at Ser-361 by PKC/PRKCD regulates its nucleolar localization. Isoform 2 is polyubiquitinated, leading to proteasomal degradation and phosphorylation by PKC/PRKCD enhances polyubiquitination. Widely expressed.

The protein resides in the cytoplasm. It localises to the nucleus. Its subcellular location is the nucleolus. Functionally, may play a role in a ERBB3-regulated signal transduction pathway. Seems be involved in growth regulation. Acts a corepressor of the androgen receptor (AR) and is regulated by the ERBB3 ligand neuregulin-1/heregulin (HRG). Inhibits transcription of some E2F1-regulated promoters, probably by recruiting histone acetylase (HAT) activity. Binds RNA. Associates with 28S, 18S and 5.8S mature rRNAs, several rRNA precursors and probably U3 small nucleolar RNA. May be involved in regulation of intermediate and late steps of rRNA processing. May be involved in ribosome assembly. Mediates cap-independent translation of specific viral IRESs (internal ribosomal entry site). Together with PTBP1 is required for the translation initiation on the foot-and-mouth disease virus (FMDV) IRES. Regulates cell proliferation, differentiation, and survival. Isoform 1 suppresses apoptosis whereas isoform 2 promotes cell differentiation. The protein is Proliferation-associated protein 2G4 (Pa2g4) of Mus musculus (Mouse).